We begin with the raw amino-acid sequence, 194 residues long: Glycerol-3-phosphate acyltransferase (194 aa).

The next 6 membrane-spanning stretches (helical) occupy residues 3-23 (AGLF…GLLL), 52-72 (VGIL…LLAW), 80-100 (MQAW…FLLF), 112-132 (VFLA…ILLV), 135-155 (WRYI…IIFF), and 162-182 (LLIA…SNIS).

This sequence belongs to the PlsY family. Probably interacts with PlsX.

Its subcellular location is the cell inner membrane. The enzyme catalyses an acyl phosphate + sn-glycerol 3-phosphate = a 1-acyl-sn-glycero-3-phosphate + phosphate. It functions in the pathway lipid metabolism; phospholipid metabolism. Catalyzes the transfer of an acyl group from acyl-phosphate (acyl-PO(4)) to glycerol-3-phosphate (G3P) to form lysophosphatidic acid (LPA). This enzyme utilizes acyl-phosphate as fatty acyl donor, but not acyl-CoA or acyl-ACP. The polypeptide is Glycerol-3-phosphate acyltransferase (Trichlorobacter lovleyi (strain ATCC BAA-1151 / DSM 17278 / SZ) (Geobacter lovleyi)).